A 395-amino-acid polypeptide reads, in one-letter code: Sulfate adenylyltransferase (395 aa).

It belongs to the sulfate adenylyltransferase family.

The enzyme catalyses sulfate + ATP + H(+) = adenosine 5'-phosphosulfate + diphosphate. The protein operates within sulfur metabolism; hydrogen sulfide biosynthesis; sulfite from sulfate: step 1/3. The polypeptide is Sulfate adenylyltransferase (Synechococcus elongatus (strain ATCC 33912 / PCC 7942 / FACHB-805) (Anacystis nidulans R2)).